A 426-amino-acid chain; its full sequence is Histidine--tRNA ligase (426 aa).

Belongs to the class-II aminoacyl-tRNA synthetase family. In terms of assembly, homodimer.

Its subcellular location is the cytoplasm. The catalysed reaction is tRNA(His) + L-histidine + ATP = L-histidyl-tRNA(His) + AMP + diphosphate + H(+). This Streptococcus thermophilus (strain ATCC BAA-491 / LMD-9) protein is Histidine--tRNA ligase.